The sequence spans 962 residues: Putative primase C962R (962 aa).

The SF3 helicase domain occupies 607 to 775 (ELDARLWIMF…PDPNNSYEKK (169 aa)). Residue 636–643 (GGGCNGKT) coordinates ATP.

It belongs to the asfivirus helicase C962R family.

This is Putative primase C962R from African swine fever virus (isolate Warthog/Namibia/Wart80/1980) (ASFV).